We begin with the raw amino-acid sequence, 201 residues long: Glycerol-3-phosphate acyltransferase (201 aa).

A run of 6 helical transmembrane segments spans residues 10–30 (MLIG…GLIL), 60–80 (LAAA…LIAA), 86–106 (AAIA…WIGF), 116–136 (LGVL…AWIV), 139–159 (LLTR…PIAL), and 166–186 (ALAA…RANI).

This sequence belongs to the PlsY family. In terms of assembly, probably interacts with PlsX.

The protein resides in the cell inner membrane. The catalysed reaction is an acyl phosphate + sn-glycerol 3-phosphate = a 1-acyl-sn-glycero-3-phosphate + phosphate. It participates in lipid metabolism; phospholipid metabolism. Functionally, catalyzes the transfer of an acyl group from acyl-phosphate (acyl-PO(4)) to glycerol-3-phosphate (G3P) to form lysophosphatidic acid (LPA). This enzyme utilizes acyl-phosphate as fatty acyl donor, but not acyl-CoA or acyl-ACP. In Brucella suis (strain ATCC 23445 / NCTC 10510), this protein is Glycerol-3-phosphate acyltransferase.